The following is a 270-amino-acid chain: MRGDVRVHTASPIAAAWLLAVGLVAHAEEPPTVALTVPAAALLPDGALGESIVRGRRYLSDTPAQLPDFVGNGLACRHCHPGRDGEVGTEANAAPFVGVVGRFPQYSARHGRLITLEQRIGDCFERSLNGRALALDHPALIDMLAYMSWLSQGVPVGAVVAGHGIPTLTLEREPDGVHGEALYQARCLACHGADGSGTLDADGRYLFPPLWGPRSFNTGAGMNRQATAAGFIKHKMPLGADDSLSDEEAWDVAGFVLTHPRPLFQEPTGD.

Positions 1–27 (MRGDVRVHTASPIAAAWLLAVGLVAHA) are cleaved as a signal peptide. Cytochrome c domains follow at residues 44-158 (PDGA…PVGA) and 174-260 (PDGV…LTHP). Heme c contacts are provided by C76, C79, H80, C187, C190, and H191.

In terms of assembly, monomer. Binds 2 heme c groups covalently per subunit.

Its subcellular location is the periplasm. It carries out the reaction 2 thiosulfate + 2 Fe(III)-[cytochrome c] = tetrathionate + 2 Fe(II)-[cytochrome c] + 2 H(+). In terms of biological role, catalyzes the oxidation of 2 molecules of thiosulfate to tetrathionate. The protein is Thiosulfate dehydrogenase (tsdA) of Allochromatium vinosum (strain ATCC 17899 / DSM 180 / NBRC 103801 / NCIMB 10441 / D) (Chromatium vinosum).